Consider the following 238-residue polypeptide: Ribosomal RNA small subunit methyltransferase G (238 aa).

S-adenosyl-L-methionine-binding positions include Gly-80, 131–132 (AE), and Arg-148.

This sequence belongs to the methyltransferase superfamily. RNA methyltransferase RsmG family.

The protein resides in the cytoplasm. In terms of biological role, specifically methylates the N7 position of a guanine in 16S rRNA. The chain is Ribosomal RNA small subunit methyltransferase G from Thermotoga maritima (strain ATCC 43589 / DSM 3109 / JCM 10099 / NBRC 100826 / MSB8).